A 319-amino-acid polypeptide reads, in one-letter code: tRNA (guanine-N(7)-)-methyltransferase (319 aa).

Positions 28, 51, and 75 each coordinate S-adenosyl-L-methionine. Substrate contacts are provided by residues Asp-134 and 167-170; that span reads TKYE.

It belongs to the class I-like SAM-binding methyltransferase superfamily. TrmB family.

The enzyme catalyses guanosine(46) in tRNA + S-adenosyl-L-methionine = N(7)-methylguanosine(46) in tRNA + S-adenosyl-L-homocysteine. The protein operates within tRNA modification; N(7)-methylguanine-tRNA biosynthesis. Its function is as follows. Catalyzes the formation of N(7)-methylguanine at position 46 (m7G46) in tRNA. The sequence is that of tRNA (guanine-N(7)-)-methyltransferase from Coprothermobacter proteolyticus (strain ATCC 35245 / DSM 5265 / OCM 4 / BT).